A 152-amino-acid chain; its full sequence is Protein SprT-like (152 aa).

Residues 7-148 (QRLVEEVSLQ…GKCKGKLNLI (142 aa)) form the SprT-like domain. Zn(2+) is bound at residue His67. Glu68 is a catalytic residue. His71 provides a ligand contact to Zn(2+).

It belongs to the SprT family. It depends on Zn(2+) as a cofactor.

The protein resides in the cytoplasm. In Bacillus cereus (strain 03BB102), this protein is Protein SprT-like.